We begin with the raw amino-acid sequence, 144 residues long: MAAQKKQGERVLPARSTRKRRQLPDMLYYDERTDSYVTPQERSLSEANAQTRPAPNTINQAVDAKQSAREARVQELMKSKLYHLRKQQKQARHKRDQWAIDYLEWKKNEDEDVWNSDAEATGPAEHTSSFLDALRFSQQFMKAE.

The disordered stretch occupies residues 1 to 58 (MAAQKKQGERVLPARSTRKRRQLPDMLYYDERTDSYVTPQERSLSEANAQTRPAPNTI). Residues 35–58 (SYVTPQERSLSEANAQTRPAPNTI) show a composition bias toward polar residues.

Component of the INO80 chromatin remodeling complex.

The protein localises to the nucleus. Its function is as follows. Component of the INO80 complex which remodels chromatin by shifting nucleosomes and is involved in DNA repair. The protein is INO80 complex subunit 5 (iec5) of Schizosaccharomyces pombe (strain 972 / ATCC 24843) (Fission yeast).